Consider the following 402-residue polypeptide: NADH-quinone oxidoreductase subunit D (402 aa).

Belongs to the complex I 49 kDa subunit family. NDH-1 is composed of 14 different subunits. Subunits NuoB, C, D, E, F, and G constitute the peripheral sector of the complex.

Its subcellular location is the cell inner membrane. The enzyme catalyses a quinone + NADH + 5 H(+)(in) = a quinol + NAD(+) + 4 H(+)(out). Functionally, NDH-1 shuttles electrons from NADH, via FMN and iron-sulfur (Fe-S) centers, to quinones in the respiratory chain. The immediate electron acceptor for the enzyme in this species is believed to be ubiquinone. Couples the redox reaction to proton translocation (for every two electrons transferred, four hydrogen ions are translocated across the cytoplasmic membrane), and thus conserves the redox energy in a proton gradient. The chain is NADH-quinone oxidoreductase subunit D from Nitrobacter winogradskyi (strain ATCC 25391 / DSM 10237 / CIP 104748 / NCIMB 11846 / Nb-255).